Here is a 445-residue protein sequence, read N- to C-terminus: 6-phosphogluconate dehydrogenase, decarboxylating (445 aa).

Residues Ala-1 to Gly-4, Asn-22 to Ser-24, Val-63 to Ala-65, and Asn-91 each bind NADP(+). Substrate is bound by residues Asn-91 and Ser-117–Gly-119. Lys-172 serves as the catalytic Proton acceptor. His-175–Asn-176 lines the substrate pocket. Catalysis depends on Glu-179, which acts as the Proton donor. The substrate site is built by Tyr-180, Lys-249, Arg-276, Arg-434, and His-440.

It belongs to the 6-phosphogluconate dehydrogenase family. As to quaternary structure, homodimer.

The catalysed reaction is 6-phospho-D-gluconate + NADP(+) = D-ribulose 5-phosphate + CO2 + NADPH. It participates in carbohydrate degradation; pentose phosphate pathway; D-ribulose 5-phosphate from D-glucose 6-phosphate (oxidative stage): step 3/3. In terms of biological role, catalyzes the oxidative decarboxylation of 6-phosphogluconate to ribulose 5-phosphate and CO(2), with concomitant reduction of NADP to NADPH. The chain is 6-phosphogluconate dehydrogenase, decarboxylating (gnd) from Pseudescherichia vulneris (Escherichia vulneris).